The primary structure comprises 452 residues: Deoxybrevianamide E synthase notF (452 aa).

Basic and acidic residues predominate over residues 1–19 (MTAPELRVDTFRAPEDAPK). The segment at 1–38 (MTAPELRVDTFRAPEDAPKEPSAQQPRLPSSPSPAQAL) is disordered. The segment covering 21-38 (PSAQQPRLPSSPSPAQAL) has biased composition (low complexity). A brevianamide F-binding site is contributed by E108. R122, K212, Y214, K282, Y284, Y371, Y436, and Y440 together coordinate dimethylallyl diphosphate.

The protein belongs to the tryptophan dimethylallyltransferase family. In terms of assembly, monomer.

It catalyses the reaction brevianamide F + dimethylallyl diphosphate = deoxybrevianamide E + diphosphate. Its pathway is alkaloid biosynthesis. Its activity is regulated as follows. Addition of 5 mM Mg(2+), Ca(2+) or Mn(2+) slightly enhances catalysis (about 100-120%). Significant reduction of enzyme activity (2%-35%) is observed with Cu(2+), Zn(2+), Fe(2+), or Sn(2+) (5 mM). Functionally, deoxybrevianamide E synthase; part of the gene cluster that mediates the biosynthesis of notoamide, a fungal indole alkaloid that belongs to a family of natural products containing a characteristic bicyclo[2.2.2]diazaoctane core. The first step of notoamide biosynthesis involves coupling of L-proline and L-tryptophan by the bimodular NRPS notE, to produce cyclo-L-tryptophan-L-proline called brevianamide F. The reverse prenyltransferase notF then acts as a deoxybrevianamide E synthase and converts brevianamide F to deoxybrevianamide E via reverse prenylation at C-2 of the indole ring leading to the bicyclo[2.2.2]diazaoctane core. Deoxybrevianamide E is further hydroxylated at C-6 of the indole ring, likely catalyzed by the cytochrome P450 monooxygenase notG, to yield 6-hydroxy-deoxybrevianamide E. 6-hydroxy-deoxybrevianamide E is a specific substrate of the prenyltransferase notC for normal prenylation at C-7 to produce 6-hydroxy-7-prenyl-deoxybrevianamide, also called notoamide S. As the proposed pivotal branching point in notoamide biosynthesis, notoamide S can be diverted to notoamide E through an oxidative pyran ring closure putatively catalyzed by either notH cytochrome P450 monooxygenase or the notD FAD-linked oxidoreductase. This step would be followed by an indole 2,3-epoxidation-initiated pinacol-like rearrangement catalyzed by the notB FAD-dependent monooxygenase leading to the formation of notoamide C and notoamide D. On the other hand notoamide S is converted to notoamide T by notH (or notD), a bifunctional oxidase that also functions as the intramolecular Diels-Alderase responsible for generation of (+)-notoamide T. To generate antipodal (-)-notoaminide T, notH' (or notD') in Aspergillus versicolor is expected to catalyze a Diels-Alder reaction leading to the opposite stereochemistry. The remaining oxidoreductase notD (or notH) likely catalyzes the oxidative pyran ring formation to yield (+)-stephacidin A. The FAD-dependent monooxygenase notI is highly similar to notB and is predicted to catalyze a similar conversion from (+)-stephacidin A to (-)-notoamide B via the 2,3-epoxidation of (+)-stephacidin A followed by a pinacol-type rearrangement. Finally, it remains unclear which enzyme could be responsible for the final hydroxylation steps leading to notoamide A and sclerotiamide. The sequence is that of Deoxybrevianamide E synthase notF from Aspergillus sp. (strain MF297-2).